A 503-amino-acid polypeptide reads, in one-letter code: MLKRFVNSIWEICQKDKFQRFTPVADAIDTFCYEPIHQASSPPFIRDAVDIKRWMMLVVIALFPATFLAIWNSGIQALVYGSGNAQLMEAFLHISGFRSYLSFIFNDIGMFSVLWTGCKIFLPLLIISYTVGGACEVLFAVIRKHKIAEGLLVTGILYPLTLPPTIPYWMAALGIAFGVVVSKELFGGTGMNILNPALSGRAFLFFTFPAKMSGDVWVGSNPTHIKDSLLTMNATAGKSIIDGFSQSTCLQTLNSTPPSVKRIHVDAIASNILHMTHVPTQNVIESQFSIWTESHPGLLLDKLTLEQLQSFVTSPLSEGGLGLLPTQFDSAYAITDVIYGIGKFSSGNLFWGNILGSLGETSTFACLLGAVFLVITGIASWRTMVSFGIGAFVTAWLFKICSILIAGKHGAWAPAKFFIPAYRQLFLGGLAFGLVFMATDPVSSPTMKLAKWIYGLFIGFMTIIIRLINPAYPEGVMLAILLGNVFAPLLDYFAVRKYRRRRI.

Transmembrane regions (helical) follow at residues 55 to 75 (MMLV…NSGI), 120 to 140 (IFLP…VLFA), 161 to 181 (TLPP…GVVV), and 186 to 206 (FGGT…FLFF). Position 248 is an FMN phosphoryl threonine (Thr248). 5 consecutive transmembrane segments (helical) span residues 361 to 381 (TSTF…IASW), 387 to 407 (FGIG…LIAG), 417 to 437 (FFIP…LVFM), 452 to 472 (WIYG…NPAY), and 475 to 495 (GVML…YFAV).

Belongs to the NqrB/RnfD family. As to quaternary structure, composed of six subunits; NqrA, NqrB, NqrC, NqrD, NqrE and NqrF. The cofactor is FMN.

It is found in the cell inner membrane. The enzyme catalyses a ubiquinone + n Na(+)(in) + NADH + H(+) = a ubiquinol + n Na(+)(out) + NAD(+). In terms of biological role, NQR complex catalyzes the reduction of ubiquinone-1 to ubiquinol by two successive reactions, coupled with the transport of Na(+) ions from the cytoplasm to the periplasm. NqrA to NqrE are probably involved in the second step, the conversion of ubisemiquinone to ubiquinol. This chain is Na(+)-translocating NADH-quinone reductase subunit B, found in Chlamydia abortus (strain DSM 27085 / S26/3) (Chlamydophila abortus).